Here is a 147-residue protein sequence, read N- to C-terminus: Large ribosomal subunit protein uL13 (147 aa).

Belongs to the universal ribosomal protein uL13 family. Part of the 50S ribosomal subunit.

In terms of biological role, this protein is one of the early assembly proteins of the 50S ribosomal subunit, although it is not seen to bind rRNA by itself. It is important during the early stages of 50S assembly. This Mycolicibacterium gilvum (strain PYR-GCK) (Mycobacterium gilvum (strain PYR-GCK)) protein is Large ribosomal subunit protein uL13.